The sequence spans 244 residues: 27 kDa core protein (244 aa).

The protein belongs to the chordopoxvirinae D3 family.

The protein resides in the virion. Functionally, late protein which is part of a large complex required for early virion morphogenesis. This complex participates in the formation of virosomes and the incorporation of virosomal contents into nascent immature virions. The sequence is that of 27 kDa core protein from Swinepox virus (strain Swine/Nebraska/17077-99/1999) (SWPV).